Consider the following 375-residue polypeptide: Growth/differentiation factor 8 (375 aa).

The N-terminal stretch at 1 to 18 is a signal peptide; it reads MQKLQISVYIYLFMLIVA. The propeptide occupies 19–266; sequence GPVDLNENSE…VTDTPKRSRR (248 aa). N47 and N71 each carry an N-linked (GlcNAc...) asparagine glycan. 4 disulfides stabilise this stretch: C272–C282, C281–C340, C309–C372, and C313–C374.

The protein belongs to the TGF-beta family. In terms of assembly, homodimer; disulfide-linked. Interacts with WFIKKN2, leading to inhibit its activity. Interacts with FSTL3. In terms of processing, synthesized as large precursor molecule that undergoes proteolytic cleavage to generate an N-terminal propeptide and a disulfide linked C-terminal dimer, which is the biologically active molecule. The circulating form consists of a latent complex of the C-terminal dimer and other proteins, including its propeptide, which maintain the C-terminal dimer in a latent, inactive state. Ligand activation requires additional cleavage of the prodomain by a tolloid-like metalloproteinase.

The protein resides in the secreted. Functionally, acts specifically as a negative regulator of skeletal muscle growth. The sequence is that of Growth/differentiation factor 8 (MSTN) from Bos gaurus (Seladang).